Reading from the N-terminus, the 123-residue chain is Small ribosomal subunit protein bS16 (123 aa).

A disordered region spans residues 86 to 123 (PVRAEQTKQPQPKAKAQQRAKDQAERDAAAAAEAAAGE). The span at 93–102 (KQPQPKAKAQ) shows a compositional bias: low complexity. The span at 104 to 113 (RAKDQAERDA) shows a compositional bias: basic and acidic residues. Residues 114–123 (AAAAEAAAGE) show a composition bias toward low complexity.

The protein belongs to the bacterial ribosomal protein bS16 family.

The polypeptide is Small ribosomal subunit protein bS16 (Paramagnetospirillum magneticum (strain ATCC 700264 / AMB-1) (Magnetospirillum magneticum)).